The chain runs to 370 residues: Protein Mut11 (370 aa).

The tract at residues 1–22 (MARGPGDTDMDEASADAAIPSS) is disordered. WD repeat units lie at residues 38–77 (GHTK…RVNT), 80–119 (GHSC…CLRT), 122–162 (GHTN…CLRE), 165–204 (AHSD…CLKT), 208–247 (RDSP…TRRT), 262–301 (GFLG…VVGR), and 329–370 (GHTA…PAAA).

It belongs to the WD repeat WDR5/wds family.

It is found in the nucleus. Part of a complex involved in 'Lys-4' histone H3 methylation. The chain is Protein Mut11 (Mut11) from Chlamydomonas reinhardtii (Chlamydomonas smithii).